A 115-amino-acid polypeptide reads, in one-letter code: Androgen-binding protein homolog (115 aa).

The signal sequence occupies residues 1-23; it reads MKGTLLLLALLVTGELGFQTTEA.

It belongs to the secretoglobin family.

The protein localises to the secreted. The polypeptide is Androgen-binding protein homolog (Mesocricetus auratus (Golden hamster)).